Consider the following 204-residue polypeptide: MLRHLLVFSLIALLAGCAGLTSREALEGQGNPAQWQIHKQQISQLDGWQINGKIGIRAPQDSGSATLFWLQRQDYYDIRLSGPLGGGAARLTGRPGDILLEVSNRGRFKAESPEALLREQLRLDLPVSNLLWWIRGLPAPDSRSRLTLDADSHLARLEQDGWQVEYQRYVEQNGYALPERLKLYGQDLEVTLVIKDWQPRQLGQ.

A signal peptide spans 1–16 (MLRHLLVFSLIALLAG). Residue C17 is the site of N-palmitoyl cysteine attachment. Residue C17 is the site of S-diacylglycerol cysteine attachment.

Belongs to the LolB family. As to quaternary structure, monomer.

It localises to the cell outer membrane. In terms of biological role, plays a critical role in the incorporation of lipoproteins in the outer membrane after they are released by the LolA protein. The sequence is that of Outer-membrane lipoprotein LolB from Ectopseudomonas mendocina (strain ymp) (Pseudomonas mendocina).